A 461-amino-acid chain; its full sequence is MTEKQTWSQRFESALHPAIALFNASISFDIELIEYDLTGSQAHAQMLAHTGIISPAEGEQLVAGLEQIREEYRQGKFQPGIDAEDVHFAVERRLTEIVGDVGKKLHTARSRNDQVGTDTRLYLRDQILQIKTQLREFQRVLLDIAEKNVETLIPGYTHLQRAQPVSLAHHLLAYFQMAQRDWERLGDVYRRVNISPLGCGALAGTTFPIDRHYTAELLQFERIYENSLDGVSDRDFAIEFLCAASLIMVHLSRLSEEIILWASEEFRFVILKDSCATGSSIMPQKKNPDVPELVRGKTGRVFGHLQAMLVIMKGLPLAYNKDLQEDKEGLFDSVNTVKACLEAMTILLQEGLEFRTQRLAEAVTQDFSNATDVADYLAARGVPFREAYNIVGKVVKTSIAAGKLLKDLTLEEWQQIHPKFADDIYEAISPRQVVAARNSYGGTGFAQVSKAVSAARKEIGE.

Belongs to the lyase 1 family. Argininosuccinate lyase subfamily.

The protein resides in the cytoplasm. It catalyses the reaction 2-(N(omega)-L-arginino)succinate = fumarate + L-arginine. The protein operates within amino-acid biosynthesis; L-arginine biosynthesis; L-arginine from L-ornithine and carbamoyl phosphate: step 3/3. With respect to regulation, strongly inhibited by L-arginine. Inhibitory effects are lowered at pH 7.0 compared to those at pH 8.0. At 42 degrees Celsius and pH 8.0, activity decreases to 77% and 25% in the presence of 1 mM and 10 mM arginine, respectively. The other amino and organic acids do not affect activity. Catalyzes the last step of arginine biosynthesis, the conversion of argininosuccinate into L-arginine and fumarate. The polypeptide is Argininosuccinate lyase (Nostoc sp. (strain PCC 7120 / SAG 25.82 / UTEX 2576)).